A 216-amino-acid chain; its full sequence is 3-isopropylmalate dehydratase small subunit (216 aa).

This sequence belongs to the LeuD family. LeuD type 1 subfamily. Heterodimer of LeuC and LeuD.

The enzyme catalyses (2R,3S)-3-isopropylmalate = (2S)-2-isopropylmalate. It functions in the pathway amino-acid biosynthesis; L-leucine biosynthesis; L-leucine from 3-methyl-2-oxobutanoate: step 2/4. Its function is as follows. Catalyzes the isomerization between 2-isopropylmalate and 3-isopropylmalate, via the formation of 2-isopropylmaleate. The chain is 3-isopropylmalate dehydratase small subunit from Polaromonas naphthalenivorans (strain CJ2).